A 94-amino-acid polypeptide reads, in one-letter code: MSRSLKKGPFVAESLIKKIEEMNEKGEKKVIKTWSRSSTIFPQMLGHTIAVHDGRKHVPVYISEDMVGHKLGEFVLTRTFKGHVDKTEKGTRVK.

This sequence belongs to the universal ribosomal protein uS19 family.

In terms of biological role, protein S19 forms a complex with S13 that binds strongly to the 16S ribosomal RNA. This Clostridium novyi (strain NT) protein is Small ribosomal subunit protein uS19.